The primary structure comprises 171 residues: MSSWILLAHAETSGFGLNLDLFETNLINLAIIIGLLVYAGRGFLGNLLSNRRAAIEAEIREVEEKLASSAQALSQAQTQLKEAEAEAARLLVEAKARAAAVRQEILDKAAADVERLKATAAQDVSTEQQRVLDELRRYAVAQALSRVETQLSQQLDEAAQQRLIDRSLATL.

A helical transmembrane segment spans residues 26 to 48 (LINLAIIIGLLVYAGRGFLGNLL).

Belongs to the ATPase B chain family. As to quaternary structure, F-type ATPases have 2 components, F(1) - the catalytic core - and F(0) - the membrane proton channel. F(1) has five subunits: alpha(3), beta(3), gamma(1), delta(1), epsilon(1). F(0) has four main subunits: a(1), b(1), b'(1) and c(10-14). The alpha and beta chains form an alternating ring which encloses part of the gamma chain. F(1) is attached to F(0) by a central stalk formed by the gamma and epsilon chains, while a peripheral stalk is formed by the delta, b and b' chains.

It is found in the cellular thylakoid membrane. Functionally, f(1)F(0) ATP synthase produces ATP from ADP in the presence of a proton or sodium gradient. F-type ATPases consist of two structural domains, F(1) containing the extramembraneous catalytic core and F(0) containing the membrane proton channel, linked together by a central stalk and a peripheral stalk. During catalysis, ATP synthesis in the catalytic domain of F(1) is coupled via a rotary mechanism of the central stalk subunits to proton translocation. Its function is as follows. Component of the F(0) channel, it forms part of the peripheral stalk, linking F(1) to F(0). This is ATP synthase subunit b from Synechococcus elongatus (strain ATCC 33912 / PCC 7942 / FACHB-805) (Anacystis nidulans R2).